A 265-amino-acid polypeptide reads, in one-letter code: Hydroxyethylthiazole kinase (265 aa).

A substrate-binding site is contributed by Met43. Positions 119 and 165 each coordinate ATP. Ala192 lines the substrate pocket.

Belongs to the Thz kinase family. Requires Mg(2+) as cofactor.

It carries out the reaction 5-(2-hydroxyethyl)-4-methylthiazole + ATP = 4-methyl-5-(2-phosphooxyethyl)-thiazole + ADP + H(+). The protein operates within cofactor biosynthesis; thiamine diphosphate biosynthesis; 4-methyl-5-(2-phosphoethyl)-thiazole from 5-(2-hydroxyethyl)-4-methylthiazole: step 1/1. Functionally, catalyzes the phosphorylation of the hydroxyl group of 4-methyl-5-beta-hydroxyethylthiazole (THZ). The protein is Hydroxyethylthiazole kinase of Haemophilus influenzae (strain 86-028NP).